A 255-amino-acid polypeptide reads, in one-letter code: Hydroxyacylglutathione hydrolase (255 aa).

Residues His53, His55, Asp57, His58, His110, Asp127, and His165 each coordinate Zn(2+).

The protein belongs to the metallo-beta-lactamase superfamily. Glyoxalase II family. As to quaternary structure, monomer. It depends on Zn(2+) as a cofactor.

The catalysed reaction is an S-(2-hydroxyacyl)glutathione + H2O = a 2-hydroxy carboxylate + glutathione + H(+). Its pathway is secondary metabolite metabolism; methylglyoxal degradation; (R)-lactate from methylglyoxal: step 2/2. Its function is as follows. Thiolesterase that catalyzes the hydrolysis of S-D-lactoyl-glutathione to form glutathione and D-lactic acid. The polypeptide is Hydroxyacylglutathione hydrolase (Xanthomonas axonopodis pv. citri (strain 306)).